A 1176-amino-acid polypeptide reads, in one-letter code: Pesticidal crystal protein Cry1Aa (1176 aa).

The protein belongs to the delta endotoxin family.

In terms of biological role, promotes colloidosmotic lysis by binding to the midgut epithelial cells of many lepidopteran larvae. This chain is Pesticidal crystal protein Cry1Aa (cry1Aa), found in Bacillus thuringiensis subsp. aizawai.